The sequence spans 851 residues: Glycogen phosphorylase, liver form (851 aa).

Position 2 is an N-acetylalanine (A2). S15 is subject to Phosphoserine; by PHK; in form phosphorylase a. AMP is bound by residues 43 to 45 (DRN), Y76, and R310. At K364 the chain carries N6-succinyllysine. K470 bears the N6-acetyllysine mark. 3 positions are modified to phosphoserine: S524, S561, and S639. Residue K681 is modified to N6-(pyridoxal phosphate)lysine. At K796 the chain carries N6-acetyllysine.

The protein belongs to the glycogen phosphorylase family. As to quaternary structure, homodimer; enzymatically active. Interacts with PPP1R3B; recruits the phosphatase PP1 which dephosphorylates and inactivates PYGL/glycogen phosphorylase. It depends on pyridoxal 5'-phosphate as a cofactor. Post-translationally, acetylation, which is up-regulated by glucose and insulin and down-regulated by glucagon, inhibits the glycogen phosphorylase activity by promoting PPP1R3B-mediated recruitment of phosphatase PP1 and Ser-15 dephosphorylation. Phosphorylation at Ser-15 converts inactive phosphorylase b into active phosphorylase a. Dephosphorylation of Ser-15 by phosphatase PP1 inactivates the enzyme.

It is found in the cytoplasm. The protein localises to the cytosol. The catalysed reaction is [(1-&gt;4)-alpha-D-glucosyl](n) + phosphate = [(1-&gt;4)-alpha-D-glucosyl](n-1) + alpha-D-glucose 1-phosphate. Its activity is regulated as follows. Allosterically regulated through the non-covalent binding of metabolites, being activated by AMP and inhibited by ATP, ADP, and glucose-6-phosphate. The activity is also controlled by post-translational modifications including phosphorylation and acetylation. Allosteric enzyme that catalyzes the rate-limiting step in glycogen catabolism, the phosphorolytic cleavage of glycogen to produce glucose-1-phosphate, and plays a central role in maintaining cellular and organismal glucose homeostasis. The polypeptide is Glycogen phosphorylase, liver form (Ovis aries (Sheep)).